A 391-amino-acid polypeptide reads, in one-letter code: Chaperone protein DnaJ (391 aa).

A J domain is found at 2 to 67 (DYYDVLGVSK…QKRESYDRYG (66 aa)). The CR-type zinc-finger motif lies at 148-226 (GVKKELLVSG…CRGQGRIKDK (79 aa)). C161, C164, C178, C181, C200, C203, C214, and C217 together coordinate Zn(2+). CXXCXGXG motif repeat units follow at residues 161–168 (CETCSGSG), 178–185 (CDRCKGSG), 200–207 (CPECGGEG), and 214–221 (CSSCRGQG).

It belongs to the DnaJ family. Homodimer. The cofactor is Zn(2+).

It is found in the cytoplasm. Participates actively in the response to hyperosmotic and heat shock by preventing the aggregation of stress-denatured proteins and by disaggregating proteins, also in an autonomous, DnaK-independent fashion. Unfolded proteins bind initially to DnaJ; upon interaction with the DnaJ-bound protein, DnaK hydrolyzes its bound ATP, resulting in the formation of a stable complex. GrpE releases ADP from DnaK; ATP binding to DnaK triggers the release of the substrate protein, thus completing the reaction cycle. Several rounds of ATP-dependent interactions between DnaJ, DnaK and GrpE are required for fully efficient folding. Also involved, together with DnaK and GrpE, in the DNA replication of plasmids through activation of initiation proteins. This is Chaperone protein DnaJ from Chlamydia abortus (strain DSM 27085 / S26/3) (Chlamydophila abortus).